We begin with the raw amino-acid sequence, 245 residues long: Collagen triple helix repeat-containing protein 1 (245 aa).

Positions 1 to 32 (MHPQGRAASPQLLLGLFLVLLLLLQLSAPSSA) are cleaved as a signal peptide. The region spanning 59–92 (QGPAGVPGRDGSPGANGIPGTPGIPGRDGFKGEK) is the Collagen-like domain. The disordered stretch occupies residues 64 to 87 (VPGRDGSPGANGIPGTPGIPGRDG). Asn-188 is a glycosylation site (N-linked (GlcNAc...) asparagine).

In terms of processing, N-glycosylated. In terms of tissue distribution, expressed after injury in the carotid arteries (at protein level). Expressed in brain, lung, and after injury in fibroblasts of the adventitia and the neointima of the arteries.

It localises to the secreted. Its subcellular location is the extracellular space. It is found in the extracellular matrix. In terms of biological role, its overexpression in smooth muscle cell lines increases their migratory ability and inhibits collagen type I expression. May act as a negative regulator of collagen matrix deposition. This Rattus norvegicus (Rat) protein is Collagen triple helix repeat-containing protein 1 (Cthrc1).